The following is a 119-amino-acid chain: Large ribosomal subunit protein bL20 (119 aa).

The protein belongs to the bacterial ribosomal protein bL20 family.

Functionally, binds directly to 23S ribosomal RNA and is necessary for the in vitro assembly process of the 50S ribosomal subunit. It is not involved in the protein synthesizing functions of that subunit. In Halalkalibacterium halodurans (strain ATCC BAA-125 / DSM 18197 / FERM 7344 / JCM 9153 / C-125) (Bacillus halodurans), this protein is Large ribosomal subunit protein bL20.